Reading from the N-terminus, the 215-residue chain is Large ribosomal subunit protein mL43 (215 aa).

Belongs to the mitochondrion-specific ribosomal protein mL43 family. In terms of assembly, component of the mitochondrial large ribosomal subunit (mt-LSU). Mature mammalian 55S mitochondrial ribosomes consist of a small (28S) and a large (39S) subunit. The 28S small subunit contains a 12S ribosomal RNA (12S mt-rRNA) and 30 different proteins. The 39S large subunit contains a 16S rRNA (16S mt-rRNA), a copy of mitochondrial valine transfer RNA (mt-tRNA(Val)), which plays an integral structural role, and 52 different proteins. As to expression, high relative levels in skeletal muscle and testis. Lower levels of expression in the heart, brain, placenta, lung, liver, kidney, pancreas, spleen, thymus, prostate, ovary, small intestine, colon and leukocytes. Expression is coregulated with TWNK.

The protein localises to the mitochondrion. This is Large ribosomal subunit protein mL43 (MRPL43) from Homo sapiens (Human).